Reading from the N-terminus, the 597-residue chain is Probable translation initiation factor IF-2 (597 aa).

One can recognise a tr-type G domain in the interval 13–229 (LRTPIVCVMG…LLGLAQKFLE (217 aa)). Residues 22-29 (GHVDHGKT) form a G1 region. 22 to 29 (GHVDHGKT) lines the GTP pocket. The interval 47–51 (AITQH) is G2. The interval 84-87 (DTPG) is G3. GTP is bound by residues 84 to 88 (DTPGH) and 138 to 141 (NKID). The tract at residues 138–141 (NKID) is G4. Positions 206–208 (SAV) are G5.

Belongs to the TRAFAC class translation factor GTPase superfamily. Classic translation factor GTPase family. IF-2 subfamily.

Functionally, function in general translation initiation by promoting the binding of the formylmethionine-tRNA to ribosomes. Seems to function along with eIF-2. The protein is Probable translation initiation factor IF-2 of Methanosarcina acetivorans (strain ATCC 35395 / DSM 2834 / JCM 12185 / C2A).